The sequence spans 527 residues: Zinc finger protein 35 (527 aa).

The segment at 9 to 221 (MALAPWGPVK…NPKTQLGQKP (213 aa)) is globular domain. The interval 16–38 (PVKVKKEEEEEENFPGQASSQQV) is disordered. Glycyl lysine isopeptide (Lys-Gly) (interchain with G-Cter in SUMO2) cross-links involve residues Lys20, Lys21, Lys99, Lys117, Lys125, Lys144, Lys158, Lys189, and Lys214. 2 C2H2-type zinc fingers span residues 222–244 (FTCS…QRIH) and 250–272 (FECH…QRIH). A Glycyl lysine isopeptide (Lys-Gly) (interchain with G-Cter in SUMO2) cross-link involves residue Lys276. 9 C2H2-type zinc fingers span residues 278–300 (YVCS…QKIH), 306–328 (FKCN…QKVH), 334–356 (YECN…QRIH), 362–384 (FACN…QRSH), 390–412 (YECK…QRIH), 418–440 (YDCS…QRIH), 446–468 (YVCN…QRIH), 474–496 (YTCN…QRTH), and 502–524 (YECE…HRTH).

The protein belongs to the krueppel C2H2-type zinc-finger protein family.

The protein resides in the nucleus. May be involved in transcriptional regulation. Involved in cell differentiation and/or proliferation. This chain is Zinc finger protein 35 (ZNF35), found in Homo sapiens (Human).